The sequence spans 181 residues: SAGA-associated factor 11 (181 aa).

An SGF11-type zinc finger spans residues 93 to 114; the sequence is FNCMNCGRQIVAGRFAPHLEKC. The segment covering 116–125 has biased composition (basic residues); the sequence is GKGRKARAKT. The segment at 116–181 is disordered; that stretch reads GKGRKARAKT…FTVRENVKGD (66 aa). A compositionally biased stretch (low complexity) spans 126-153; sequence TRSTTAAQNRNARRSPNPRYSPYPNSAS.

This sequence belongs to the SGF11 family. Component of a deubiquitination module (DUB module) formed by ENY2, SGF11, and UBP22 in Arabidopsis. Interacts directly with ENY2 and UBP22. Interacts with DDA1. In terms of processing, ubiquitinated in DET1-dependent manner. Ubiquitination probably leads to its subsequent proteasomal degradation.

The protein resides in the nucleus. The protein localises to the nucleoplasm. Its function is as follows. Component of a deubiquitination module (DUB module) that specifically deubiquinates monoubiquinated histone H2B (H2Bub). Does not seem to be a component of the TREX-2 complex. Seems to act independently of the SAGA multiprotein complex. The DUB module is responsible for the major H2Bub deubiquitinase activity in Arabidopsis. The sequence is that of SAGA-associated factor 11 from Arabidopsis thaliana (Mouse-ear cress).